Here is a 333-residue protein sequence, read N- to C-terminus: Holliday junction branch migration complex subunit RuvB (333 aa).

A large ATPase domain (RuvB-L) region spans residues 1–182 (MDERLLSGES…FGVLSRLEYY (182 aa)). Residues L21, R22, G63, K66, T67, T68, 129 to 131 (EDF), R172, Y182, and R219 contribute to the ATP site. T67 contacts Mg(2+). Residues 183–253 (TVDQLSAIVE…ITQMALELLQ (71 aa)) are small ATPAse domain (RuvB-S). The head domain (RuvB-H) stretch occupies residues 256–333 (KLGLDHIDHK…QHFGMEMPKI (78 aa)). R311 and R316 together coordinate DNA.

Belongs to the RuvB family. In terms of assembly, homohexamer. Forms an RuvA(8)-RuvB(12)-Holliday junction (HJ) complex. HJ DNA is sandwiched between 2 RuvA tetramers; dsDNA enters through RuvA and exits via RuvB. An RuvB hexamer assembles on each DNA strand where it exits the tetramer. Each RuvB hexamer is contacted by two RuvA subunits (via domain III) on 2 adjacent RuvB subunits; this complex drives branch migration. In the full resolvosome a probable DNA-RuvA(4)-RuvB(12)-RuvC(2) complex forms which resolves the HJ.

It is found in the cytoplasm. It carries out the reaction ATP + H2O = ADP + phosphate + H(+). In terms of biological role, the RuvA-RuvB-RuvC complex processes Holliday junction (HJ) DNA during genetic recombination and DNA repair, while the RuvA-RuvB complex plays an important role in the rescue of blocked DNA replication forks via replication fork reversal (RFR). RuvA specifically binds to HJ cruciform DNA, conferring on it an open structure. The RuvB hexamer acts as an ATP-dependent pump, pulling dsDNA into and through the RuvAB complex. RuvB forms 2 homohexamers on either side of HJ DNA bound by 1 or 2 RuvA tetramers; 4 subunits per hexamer contact DNA at a time. Coordinated motions by a converter formed by DNA-disengaged RuvB subunits stimulates ATP hydrolysis and nucleotide exchange. Immobilization of the converter enables RuvB to convert the ATP-contained energy into a lever motion, pulling 2 nucleotides of DNA out of the RuvA tetramer per ATP hydrolyzed, thus driving DNA branch migration. The RuvB motors rotate together with the DNA substrate, which together with the progressing nucleotide cycle form the mechanistic basis for DNA recombination by continuous HJ branch migration. Branch migration allows RuvC to scan DNA until it finds its consensus sequence, where it cleaves and resolves cruciform DNA. The protein is Holliday junction branch migration complex subunit RuvB of Bacillus cytotoxicus (strain DSM 22905 / CIP 110041 / 391-98 / NVH 391-98).